Consider the following 604-residue polypeptide: Glutamine--fructose-6-phosphate aminotransferase [isomerizing] (604 aa).

Cys-2 (nucleophile; for GATase activity) is an active-site residue. The 217-residue stretch at 2–218 (CGIVGVVGNR…DKELVILTKD (217 aa)) folds into the Glutamine amidotransferase type-2 domain. 2 SIS domains span residues 284-423 (IVKT…ANGK) and 456-594 (VEKL…VDKP). Residue Lys-599 is the For Fru-6P isomerization activity of the active site.

In terms of assembly, homodimer.

The protein localises to the cytoplasm. The enzyme catalyses D-fructose 6-phosphate + L-glutamine = D-glucosamine 6-phosphate + L-glutamate. Catalyzes the first step in hexosamine metabolism, converting fructose-6P into glucosamine-6P using glutamine as a nitrogen source. This Streptococcus pyogenes serotype M6 (strain ATCC BAA-946 / MGAS10394) protein is Glutamine--fructose-6-phosphate aminotransferase [isomerizing].